A 123-amino-acid chain; its full sequence is Small ribosomal subunit protein uS12 (123 aa).

Asp-89 carries the 3-methylthioaspartic acid modification.

Belongs to the universal ribosomal protein uS12 family. In terms of assembly, part of the 30S ribosomal subunit. Contacts proteins S8 and S17. May interact with IF1 in the 30S initiation complex.

In terms of biological role, with S4 and S5 plays an important role in translational accuracy. Interacts with and stabilizes bases of the 16S rRNA that are involved in tRNA selection in the A site and with the mRNA backbone. Located at the interface of the 30S and 50S subunits, it traverses the body of the 30S subunit contacting proteins on the other side and probably holding the rRNA structure together. The combined cluster of proteins S8, S12 and S17 appears to hold together the shoulder and platform of the 30S subunit. This is Small ribosomal subunit protein uS12 from Syntrophotalea carbinolica (strain DSM 2380 / NBRC 103641 / GraBd1) (Pelobacter carbinolicus).